We begin with the raw amino-acid sequence, 61 residues long: Small ribosomal subunit protein uS14 (61 aa).

4 residues coordinate Zn(2+): C24, C27, C40, and C43.

Belongs to the universal ribosomal protein uS14 family. Zinc-binding uS14 subfamily. As to quaternary structure, part of the 30S ribosomal subunit. Contacts proteins S3 and S10. The cofactor is Zn(2+).

Binds 16S rRNA, required for the assembly of 30S particles and may also be responsible for determining the conformation of the 16S rRNA at the A site. The protein is Small ribosomal subunit protein uS14 of Treponema pallidum (strain Nichols).